The chain runs to 478 residues: Trigger factor (478 aa).

Positions 154–167 are enriched in basic and acidic residues; the sequence is MAKDSRSFEPREEG. Disordered regions lie at residues 154 to 173 and 444 to 478; these read MAKDSRSFEPREEGAEAQSG and LFAEDDEADAVTGAAATDEKPSESSNEAAADKAAG. The 86-residue stretch at 173–258 folds into the PPIase FKBP-type domain; it reads GDRVTIDFVG…VKAVAAPGET (86 aa).

The protein belongs to the FKBP-type PPIase family. Tig subfamily.

The protein localises to the cytoplasm. It catalyses the reaction [protein]-peptidylproline (omega=180) = [protein]-peptidylproline (omega=0). Functionally, involved in protein export. Acts as a chaperone by maintaining the newly synthesized protein in an open conformation. Functions as a peptidyl-prolyl cis-trans isomerase. The polypeptide is Trigger factor (Methylorubrum populi (strain ATCC BAA-705 / NCIMB 13946 / BJ001) (Methylobacterium populi)).